The sequence spans 419 residues: Monooxygenase CTB7 (419 aa).

This sequence belongs to the aromatic-ring hydroxylase family. KMO subfamily.

The protein operates within mycotoxin biosynthesis. Its function is as follows. Monooxygenase; part of the gene cluster that mediates the biosynthesis of cercosporin, a light-activated, non-host-selective toxin. The perylenequinone chromophore of cercosporin absorbs light energy to attain an electronically-activated triplet state and produces active oxygen species such as the hydroxyl radical, superoxide, hydrogen peroxide or singlet oxygen upon reaction with oxygen molecules. These reactive oxygen species cause damage to various cellular components including lipids, proteins and nucleic acids. The first step of cercosporin biosynthesis is performed by the polyketide synthase CTB1 which catalyzes the formation of nor-toralactone. The starter unit acyltransferase (SAT) domain of CTB1 initiates polyketide extension by the selective utilization of acetyl-CoA, which is elongated to the heptaketide in the beta-ketoacyl synthase (KS) domain by successive condensations with six malonyl units introduced by the malonyl acyltransferase (MAT) domain. The product template (PT) domain catalyzes C4-C9 and C2-C11 aldol cyclizations and dehydrations to a trihydroxynaphthalene, which is thought to be delivered to the thioesterase (TE) domain for product release. The bifunctional enzyme CTB3 then methylates nor-toralactone to toralactone before conducting an unusual oxidative aromatic ring opening. The O-methyltransferase CTB2 further methylates the nascent OH-6 of the CBT3 product, blocking further oxidation at this site before the reductase CTB6 reduces the 2-oxopropyl ketone at position C7, giving naphthalene. The FAD-dependent monooxygenase CTB5 in concert with the multicopper oxidase CTB12 are responsible for homodimerization of naphthalene with CTB7 installing the dioxepine moiety, finally producing cercosporin. The fasciclin domain-containing protein CTB11 might act with CTB5 and CTB12 whereas the roles of CTB9 and CTB10 have still to be elucidated. The sequence is that of Monooxygenase CTB7 from Cercospora beticola (Sugarbeet leaf spot fungus).